The chain runs to 198 residues: HTH-type transcriptional regulator BetI (198 aa).

The region spanning 8-68 (PLRRRELIDA…ATMRHLLREL (61 aa)) is the HTH tetR-type domain. The H-T-H motif DNA-binding region spans 31–50 (TVAQIAHEAGVSPALAHHYF).

It functions in the pathway amine and polyamine biosynthesis; betaine biosynthesis via choline pathway [regulation]. Functionally, repressor involved in the biosynthesis of the osmoprotectant glycine betaine. It represses transcription of the choline transporter BetT and the genes of BetAB involved in the synthesis of glycine betaine. The protein is HTH-type transcriptional regulator BetI of Brucella melitensis biotype 2 (strain ATCC 23457).